The chain runs to 124 residues: Small ribosomal subunit protein uS12 (124 aa).

Asp-89 carries the post-translational modification 3-methylthioaspartic acid.

It belongs to the universal ribosomal protein uS12 family. Part of the 30S ribosomal subunit. Contacts proteins S8 and S17. May interact with IF1 in the 30S initiation complex.

Functionally, with S4 and S5 plays an important role in translational accuracy. Interacts with and stabilizes bases of the 16S rRNA that are involved in tRNA selection in the A site and with the mRNA backbone. Located at the interface of the 30S and 50S subunits, it traverses the body of the 30S subunit contacting proteins on the other side and probably holding the rRNA structure together. The combined cluster of proteins S8, S12 and S17 appears to hold together the shoulder and platform of the 30S subunit. The chain is Small ribosomal subunit protein uS12 from Shewanella sp. (strain ANA-3).